Consider the following 486-residue polypeptide: Putative ankyrin repeat protein R634 (486 aa).

ANK repeat units lie at residues 84 to 113 (DLFK…NVRE), 114 to 143 (HNDV…DLYA), 145 to 173 (KNTL…NFRE), 174 to 203 (NCDT…DVNS), 205 to 233 (SHKS…NIDW), 234 to 263 (RHNY…NLEI), 265 to 293 (DGCI…EIGF), 307 to 336 (NKIT…ATIK), 337 to 366 (EKNY…SLEK), 367 to 396 (KINK…NVKT), 398 to 426 (EGLP…DVTS), and 427 to 456 (YDNY…NVND).

The protein is Putative ankyrin repeat protein R634 of Acanthamoeba polyphaga (Amoeba).